Consider the following 168-residue polypeptide: Small ribosomal subunit protein uS5 (168 aa).

One can recognise an S5 DRBM domain in the interval 14–77; sequence FEERVVSINR…EAAKKNLITV (64 aa).

This sequence belongs to the universal ribosomal protein uS5 family. Part of the 30S ribosomal subunit. Contacts proteins S4 and S8.

With S4 and S12 plays an important role in translational accuracy. Its function is as follows. Located at the back of the 30S subunit body where it stabilizes the conformation of the head with respect to the body. The chain is Small ribosomal subunit protein uS5 from Lactococcus lactis subsp. cremoris (strain MG1363).